Consider the following 384-residue polypeptide: 8-amino-7-oxononanoate synthase (384 aa).

Arg21 is a binding site for substrate. A pyridoxal 5'-phosphate-binding site is contributed by 108–109 (GF). His133 is a binding site for substrate. 3 residues coordinate pyridoxal 5'-phosphate: Ser179, His207, and Thr233. N6-(pyridoxal phosphate)lysine is present on Lys236. Thr352 is a substrate binding site.

This sequence belongs to the class-II pyridoxal-phosphate-dependent aminotransferase family. BioF subfamily. Homodimer. It depends on pyridoxal 5'-phosphate as a cofactor.

The catalysed reaction is 6-carboxyhexanoyl-[ACP] + L-alanine + H(+) = (8S)-8-amino-7-oxononanoate + holo-[ACP] + CO2. It functions in the pathway cofactor biosynthesis; biotin biosynthesis. Its function is as follows. Catalyzes the decarboxylative condensation of pimeloyl-[acyl-carrier protein] and L-alanine to produce 8-amino-7-oxononanoate (AON), [acyl-carrier protein], and carbon dioxide. This chain is 8-amino-7-oxononanoate synthase, found in Enterobacter sp. (strain 638).